The sequence spans 116 residues: Phosphoribosyl-ATP pyrophosphatase (116 aa).

This sequence belongs to the PRA-PH family.

The protein localises to the cytoplasm. The catalysed reaction is 1-(5-phospho-beta-D-ribosyl)-ATP + H2O = 1-(5-phospho-beta-D-ribosyl)-5'-AMP + diphosphate + H(+). Its pathway is amino-acid biosynthesis; L-histidine biosynthesis; L-histidine from 5-phospho-alpha-D-ribose 1-diphosphate: step 2/9. The polypeptide is Phosphoribosyl-ATP pyrophosphatase (Bordetella avium (strain 197N)).